The primary structure comprises 168 residues: Crossover junction endodeoxyribonuclease RuvC (168 aa).

Residues D8, E68, and D140 contribute to the active site. Residues D8, E68, and D140 each coordinate Mg(2+).

This sequence belongs to the RuvC family. Homodimer which binds Holliday junction (HJ) DNA. The HJ becomes 2-fold symmetrical on binding to RuvC with unstacked arms; it has a different conformation from HJ DNA in complex with RuvA. In the full resolvosome a probable DNA-RuvA(4)-RuvB(12)-RuvC(2) complex forms which resolves the HJ. The cofactor is Mg(2+).

The protein localises to the cytoplasm. The catalysed reaction is Endonucleolytic cleavage at a junction such as a reciprocal single-stranded crossover between two homologous DNA duplexes (Holliday junction).. Its function is as follows. The RuvA-RuvB-RuvC complex processes Holliday junction (HJ) DNA during genetic recombination and DNA repair. Endonuclease that resolves HJ intermediates. Cleaves cruciform DNA by making single-stranded nicks across the HJ at symmetrical positions within the homologous arms, yielding a 5'-phosphate and a 3'-hydroxyl group; requires a central core of homology in the junction. The consensus cleavage sequence is 5'-(A/T)TT(C/G)-3'. Cleavage occurs on the 3'-side of the TT dinucleotide at the point of strand exchange. HJ branch migration catalyzed by RuvA-RuvB allows RuvC to scan DNA until it finds its consensus sequence, where it cleaves and resolves the cruciform DNA. This Lawsonia intracellularis (strain PHE/MN1-00) protein is Crossover junction endodeoxyribonuclease RuvC.